Consider the following 186-residue polypeptide: Fucolectin-6 (186 aa).

The N-terminal stretch at 1 to 32 is a signal peptide; that stretch reads MKTCNLTDRMKVKMIMLLFQILAISTLQSVSA. The F5/8 type C-like stretch occupies residues 40 to 186; sequence QENVAVRGKA…VEVNAMLPAN (147 aa). N67, D70, N72, and S81 together coordinate Ca(2+). Intrachain disulfides connect C82–C175, C114–C115, and C137–C153. 2 residues coordinate alpha-L-fucose: H84 and R111. Positions 111–113 match the Cell attachment site motif; the sequence is RGD. R118 contacts alpha-L-fucose. The Ca(2+) site is built by C175 and E176.

It belongs to the fucolectin family. As to quaternary structure, homotrimer. In terms of tissue distribution, gill mucous cells.

It localises to the secreted. In terms of biological role, acts as a defensive agent. Recognizes blood group fucosylated oligosaccharides including A, B, H and Lewis B-type antigens. Does not recognize Lewis A antigen and has low affinity for monovalent haptens. The polypeptide is Fucolectin-6 (Anguilla japonica (Japanese eel)).